A 432-amino-acid polypeptide reads, in one-letter code: Enolase (432 aa).

Gln163 lines the (2R)-2-phosphoglycerate pocket. Catalysis depends on Glu205, which acts as the Proton donor. Residues Asp242, Glu287, and Asp314 each coordinate Mg(2+). Residues Lys339, Arg368, Ser369, and Lys390 each contribute to the (2R)-2-phosphoglycerate site. Lys339 (proton acceptor) is an active-site residue.

The protein belongs to the enolase family. The cofactor is Mg(2+).

It localises to the cytoplasm. It is found in the secreted. The protein resides in the cell surface. It carries out the reaction (2R)-2-phosphoglycerate = phosphoenolpyruvate + H2O. The protein operates within carbohydrate degradation; glycolysis; pyruvate from D-glyceraldehyde 3-phosphate: step 4/5. In terms of biological role, catalyzes the reversible conversion of 2-phosphoglycerate (2-PG) into phosphoenolpyruvate (PEP). It is essential for the degradation of carbohydrates via glycolysis. This is Enolase from Myxococcus xanthus (strain DK1622).